The chain runs to 121 residues: Large ribosomal subunit protein uL18 (121 aa).

The protein belongs to the universal ribosomal protein uL18 family. Part of the 50S ribosomal subunit; part of the 5S rRNA/L5/L18/L25 subcomplex. Contacts the 5S and 23S rRNAs.

This is one of the proteins that bind and probably mediate the attachment of the 5S RNA into the large ribosomal subunit, where it forms part of the central protuberance. The sequence is that of Large ribosomal subunit protein uL18 from Pelobacter propionicus (strain DSM 2379 / NBRC 103807 / OttBd1).